The primary structure comprises 141 residues: Auxin-responsive protein SAUR62 (141 aa).

It belongs to the ARG7 family. As to expression, expressed in stamen filaments and petals.

The protein localises to the cell membrane. Functionally, may promote auxin-stimulated organ elongation, such as hypocotyls, stamen filaments and petals. The chain is Auxin-responsive protein SAUR62 from Arabidopsis thaliana (Mouse-ear cress).